Here is a 359-residue protein sequence, read N- to C-terminus: MLISQRPSLAEEAVAETRSRFVIEPLEPGFGYTLGNSLRRTLLSSIPGAAVTSLRIDGVLHEFTTIPGVKEDVTDVILNLKELVVSSEEDEPVTMYLRKQGPGEVTAADIVPPAGVTVHNPDLHIATLNGKGKLEIELVVERGRGYVPAVQNKQTGAEIGRIPVDSIYSPVLKVTYKVEATRVEQRTDFDKLILDVETKPSITPRDAVASAGRTLVELFGLARELNVDAEGIEIGPSPAEADTIAAYAMPIEDLDLTVRSYNCLKREGIHTVGELVSRSEADLLDIRNFGAKSIDEVKLKLVGLGLSLKDSPPGFDPSAAAAEYPSEGWASETETVGGLGRVEDNGYDDGQDYAETEQL.

The interval 1–226 (MLISQRPSLA…ELFGLARELN (226 aa)) is alpha N-terminal domain (alpha-NTD). An alpha C-terminal domain (alpha-CTD) region spans residues 241–359 (ADTIAAYAMP…GQDYAETEQL (119 aa)). Residues 315–359 (FDPSAAAAEYPSEGWASETETVGGLGRVEDNGYDDGQDYAETEQL) form a disordered region. Over residues 345–359 (NGYDDGQDYAETEQL) the composition is skewed to acidic residues.

This sequence belongs to the RNA polymerase alpha chain family. As to quaternary structure, homodimer. The RNAP catalytic core consists of 2 alpha, 1 beta, 1 beta' and 1 omega subunit. When a sigma factor is associated with the core the holoenzyme is formed, which can initiate transcription.

It catalyses the reaction RNA(n) + a ribonucleoside 5'-triphosphate = RNA(n+1) + diphosphate. Functionally, DNA-dependent RNA polymerase catalyzes the transcription of DNA into RNA using the four ribonucleoside triphosphates as substrates. This Saccharopolyspora erythraea (strain ATCC 11635 / DSM 40517 / JCM 4748 / NBRC 13426 / NCIMB 8594 / NRRL 2338) protein is DNA-directed RNA polymerase subunit alpha.